The chain runs to 79 residues: Small ribosomal subunit protein bS21 (79 aa).

Positions 59–79 (RKKMQREGLLPMKPKPVVGVR) are disordered.

The protein belongs to the bacterial ribosomal protein bS21 family.

In Methylocella silvestris (strain DSM 15510 / CIP 108128 / LMG 27833 / NCIMB 13906 / BL2), this protein is Small ribosomal subunit protein bS21.